Consider the following 359-residue polypeptide: Zinc finger CCCH domain-containing protein 20 (359 aa).

3 consecutive C3H1-type zinc fingers follow at residues 75–107, 119–145, and 153–177; these read TCDHFRMYEFKVRRCARGRSHDWTECPYAHPGE, YSGTACPEFRKGCCKRGDACEFSHGVF, and RYRTQPCKDGGNCRRRVCFFAHSPD. 2 disordered regions span residues 207–226 and 334–359; these read SISPSSNSPPVSPRGDSDSS and MGRIEPDPDQGAGDTPDVGWVSDLVM.

The chain is Zinc finger CCCH domain-containing protein 20 from Arabidopsis thaliana (Mouse-ear cress).